A 320-amino-acid chain; its full sequence is Agamous-like MADS-box protein AGL90 (320 aa).

The 59-residue stretch at 1 to 59 (MKKVKLSLIANERSRKTSFMKRKNGIFKKLHELSTLCGVQACALIYSPFIPVPESWPSR) folds into the MADS-box domain. The stretch at 80–115 (KMMDQETHLMERITKAKEQLKNLAAENRELQVRRFM) forms a coiled coil.

Interacts with AGL62.

The protein localises to the nucleus. In terms of biological role, probable transcription factor. This is Agamous-like MADS-box protein AGL90 (AGL90) from Arabidopsis thaliana (Mouse-ear cress).